The chain runs to 183 residues: Seminal plasma protein BSP-30 kDa (183 aa).

Residues 1-25 form the signal peptide; sequence MAPLVGLFLIWAGASVFQQLHPVNG. A disordered region spans residues 23–47; that stretch reads VNGGDIPDPGSKPTPPGMADELPTE. O-linked (GalNAc...) threonine glycosylation is found at threonine 36, threonine 46, threonine 57, threonine 58, threonine 59, and threonine 64. Fibronectin type-II domains follow at residues 92–136 and 137–183; these read FEGP…FCTE and RDEP…WKYC. Cystine bridges form between cysteine 97-cysteine 121, cysteine 111-cysteine 134, cysteine 142-cysteine 168, and cysteine 156-cysteine 183.

The protein belongs to the seminal plasma protein family.

Its subcellular location is the secreted. Functionally, binds to spermatozoa upon ejaculation and may play a role in sperm capacitation. Displays heparin-, gelatin- and phospholipid-binding activities. The chain is Seminal plasma protein BSP-30 kDa from Bos taurus (Bovine).